Consider the following 367-residue polypeptide: Selenoprotein Pa (367 aa).

The N-terminal stretch at 1–19 (MWKALSLTLALCLLVGCSA) is a signal peptide. A non-standard amino acid (selenocysteine) is located at residue U59. N109 carries N-linked (GlcNAc...) asparagine glycosylation. Residues 191–220 (EVNKPVEEEPRQDHGHHEHGHHEHQGEAER) are compositionally biased toward basic and acidic residues. A disordered region spans residues 191–241 (EVNKPVEEEPRQDHGHHEHGHHEHQGEAERHRHGHHHPHHHHHHHRGQQQV). A compositionally biased stretch (basic residues) spans 221–237 (HRHGHHHPHHHHHHHRG). Residues U267, U273, U279, U290, U292, U294, U310, U320, U322, U336, U338, U346, U353, U355, U362, and U364 are each a non-standard amino acid (selenocysteine). A disordered region spans residues 309–367 (LUHCDEPLPASUPUQGLKEQDNHIKETUQURPAPPAEUELSQPTUVUPAGDATUGURKK). The span at 326–336 (KEQDNHIKETU) shows a compositional bias: basic and acidic residues.

This sequence belongs to the selenoprotein P family.

Its subcellular location is the secreted. Might be responsible for some of the extracellular antioxidant defense properties of selenium or might be involved in the transport of selenium. This Danio rerio (Zebrafish) protein is Selenoprotein Pa (sepp1a).